The primary structure comprises 81 residues: UPF0180 protein RBAM_013970 (81 aa).

The protein belongs to the UPF0180 family.

This is UPF0180 protein RBAM_013970 from Bacillus velezensis (strain DSM 23117 / BGSC 10A6 / LMG 26770 / FZB42) (Bacillus amyloliquefaciens subsp. plantarum).